A 441-amino-acid chain; its full sequence is ATP-dependent protease ATPase subunit HslU (441 aa).

Residues I18, 60 to 65, D254, E319, and R391 contribute to the ATP site; that span reads GVGKTE.

This sequence belongs to the ClpX chaperone family. HslU subfamily. A double ring-shaped homohexamer of HslV is capped on each side by a ring-shaped HslU homohexamer. The assembly of the HslU/HslV complex is dependent on binding of ATP.

The protein localises to the cytoplasm. In terms of biological role, ATPase subunit of a proteasome-like degradation complex; this subunit has chaperone activity. The binding of ATP and its subsequent hydrolysis by HslU are essential for unfolding of protein substrates subsequently hydrolyzed by HslV. HslU recognizes the N-terminal part of its protein substrates and unfolds these before they are guided to HslV for hydrolysis. This chain is ATP-dependent protease ATPase subunit HslU, found in Actinobacillus succinogenes (strain ATCC 55618 / DSM 22257 / CCUG 43843 / 130Z).